Consider the following 236-residue polypeptide: uncharacterized protein (236 aa).

Residues 4–225 (LLEASIEQAG…TGLEGQSLLD (222 aa)) form the ABC transporter domain. 38 to 45 (GANGAGKS) contributes to the ATP binding site.

Belongs to the ABC transporter superfamily.

This is an uncharacterized protein from Bacillus subtilis (strain 168).